A 111-amino-acid polypeptide reads, in one-letter code: Estrogen receptor (111 aa).

Residues 1–42 (PSGYAVREAGPPAYYRPNSDNRRQGGRERLASTSDKGSMAVE) form a disordered region. The tract at residues 1–49 (PSGYAVREAGPPAYYRPNSDNRRQGGRERLASTSDKGSMAVESAKETRY) is modulating. A compositionally biased stretch (basic and acidic residues) spans 19–30 (SDNRRQGGRERL). Ser-32 carries the post-translational modification Phosphoserine. 2 consecutive NR C4-type zinc fingers follow at residues 50–70 (CAVCNDYASGYHYGVWSCEGC) and 86–110 (CPATNQCTIDKNRRKSCQACRLRKC). The segment at residues 50-111 (CAVCNDYASG…CQACRLRKCY (62 aa)) is a DNA-binding region (nuclear receptor).

This sequence belongs to the nuclear hormone receptor family. NR3 subfamily. In terms of assembly, binds DNA as a homodimer. Can form a heterodimer with ESR2. Interacts with coactivator NCOA5. Interacts with PELP1, the interaction is enhanced by 17-beta-estradiol; the interaction increases ESR1 transcriptional activity. Interacts with NCOA7; the interaction is ligand-inducible. Interacts with AKAP13, CUEDC2, HEXIM1, KDM5A, MAP1S, SMARD1, and UBE1C. Interacts with MUC1; the interaction is stimulated by 7 beta-estradiol (E2) and enhances ESR1-mediated transcription. Interacts with DNTTIP2, and UIMC1. Interacts with KMT2D/MLL2. Interacts with ATAD2; the interaction is enhanced by estradiol. Interacts with KIF18A and LDB1. Interacts with RLIM (via its C-terminus). Interacts with MACROD1. Interacts with SH2D4A and PLCG. Interacts with SH2D4A; the interaction blocks binding to PLCG and inhibits estrogen-induced cell proliferation. Interacts with DYNLL1. Interacts with CCDC62; the interaction requires estradiol and appears to enhance the transcription of target genes. Interacts with NR2C1; the interaction prevents homodimerization of ESR1 and suppresses its transcriptional activity and cell growth. Interacts with DNAAF4. Interacts with PRMT2. Interacts with RBFOX2. Interacts with EP300; the interaction is estrogen-dependent and enhanced by CITED1. Interacts with CITED1; the interaction is estrogen-dependent. Interacts with FAM120B, FOXL2, PHB2 and SLC30A9. Interacts with coactivators NCOA3 and NCOA6. Interacts with STK3/MST2 only in the presence of SAV1 and vice-versa. Binds to CSNK1D. Interacts with NCOA2; NCOA2 can interact with ESR1 AF-1 and AF-2 domains simultaneously and mediate their transcriptional synergy. Interacts with DDX5. Interacts with NCOA1; the interaction seems to require a self-association of N-terminal and C-terminal regions. Interacts with ZNF366, DDX17, NFKB1, RELA, SP1 and SP3. Interacts with NRIP1. Interacts with GPER1; the interaction occurs in an estrogen-dependent manner. Interacts with CLOCK and the interaction is stimulated by estrogen. Interacts with TRIP4 (ufmylated); estrogen dependent. Interacts with LMTK3; the interaction phosphorylates ESR1 (in vitro) and protects it against proteasomal degradation. Interacts with CCAR2 (via N-terminus) in a ligand-independent manner. Interacts with ZFHX3. Interacts with SFR1 in a ligand-dependent and -independent manner. Interacts with DCAF13, LATS1 and DCAF1; regulates ESR1 ubiquitination and ubiquitin-mediated proteasomal degradation. Interacts (via DNA-binding domain) with POU4F2 (C-terminus); this interaction increases the estrogen receptor ESR1 transcriptional activity in a DNA- and ligand 17-beta-estradiol-independent manner. Interacts with ESRRB isoform 1. Interacts with UBE3A and WBP2. Interacts with GTF2B. Interacts with RBM39. In the absence of hormonal ligand, interacts with TACC1. Interacts with PI3KR1 or PI3KR2 and PTK2/FAK1. Interacts with SRC. Interacts with BAG1; the interaction is promoted in the absence of estradiol (17-beta-estradiol/E2). Interacts with and ubiquitinated by STUB1; the interaction is promoted in the absence of estradiol (17-beta-estradiol/E2). Interacts with NEDD8. Post-translationally, ubiquitinated; regulated by LATS1 via DCAF1 it leads to ESR1 proteasomal degradation. Deubiquitinated by OTUB1. Ubiquitinated by STUB1/CHIP; in the CA1 hippocampal region following loss of endogenous circulating estradiol (17-beta-estradiol/E2). Ubiquitinated by UBR5, leading to its degradation: UBR5 specifically recognizes and binds ligand-bound ESR1 when it is not associated with coactivators (NCOAs). In presence of NCOAs, the UBR5-degron is not accessible, preventing its ubiquitination and degradation. Dimethylated by PRMT1. Demethylated by JMJD6. In terms of processing, palmitoylated by ZDHHC7 and ZDHHC21. This modification is required for plasma membrane targeting and for rapid intracellular signaling via ERK and AKT kinases and cAMP generation, but not for signaling mediated by the nuclear hormone receptor. Post-translationally, phosphorylated by cyclin A/CDK2 and CK1. Phosphorylation probably enhances transcriptional activity. Dephosphorylation by PPP5C inhibits its transactivation activity. Phosphorylated by LMTK3 (in vitro).

It is found in the nucleus. The protein localises to the cytoplasm. The protein resides in the golgi apparatus. It localises to the cell membrane. In terms of biological role, nuclear hormone receptor. The steroid hormones and their receptors are involved in the regulation of eukaryotic gene expression and affect cellular proliferation and differentiation in target tissues. Ligand-dependent nuclear transactivation involves either direct homodimer binding to a palindromic estrogen response element (ERE) sequence or association with other DNA-binding transcription factors, such as AP-1/c-Jun, c-Fos, ATF-2, Sp1 and Sp3, to mediate ERE-independent signaling. Ligand binding induces a conformational change allowing subsequent or combinatorial association with multiprotein coactivator complexes through LXXLL motifs of their respective components. Mutual transrepression occurs between the estrogen receptor (ER) and NF-kappa-B in a cell-type specific manner. Decreases NF-kappa-B DNA-binding activity and inhibits NF-kappa-B-mediated transcription from the IL6 promoter and displace RELA/p65 and associated coregulators from the promoter. Recruited to the NF-kappa-B response element of the CCL2 and IL8 promoters and can displace CREBBP. Present with NF-kappa-B components RELA/p65 and NFKB1/p50 on ERE sequences. Can also act synergistically with NF-kappa-B to activate transcription involving respective recruitment adjacent response elements; the function involves CREBBP. Can activate the transcriptional activity of TFF1. Also mediates membrane-initiated estrogen signaling involving various kinase cascades. Essential for MTA1-mediated transcriptional regulation of BRCA1 and BCAS3. Maintains neuronal survival in response to ischemic reperfusion injury when in the presence of circulating estradiol (17-beta-estradiol/E2). The polypeptide is Estrogen receptor (ESR1) (Ovis aries (Sheep)).